The chain runs to 423 residues: Carboxypeptidase S1 (423 aa).

Cystine bridges form between C8/C68, C55/C300, C223/C246, and C230/C239. S143 is an active-site residue. An N-linked (GlcNAc...) asparagine glycan is attached at N200. D340 is a catalytic residue. A substrate-binding site is contributed by C343. The active site involves H397. E398 serves as a coordination point for substrate.

The protein belongs to the peptidase S10 family.

The catalysed reaction is Preferential release of a C-terminal arginine or lysine residue.. This chain is Carboxypeptidase S1, found in Penicillium janthinellum (Penicillium vitale).